The primary structure comprises 235 residues: uncharacterized protein (235 aa).

The interval 37–235 (QNAKLNDGDN…GGEDYPWPWN (199 aa)) is disordered. A compositionally biased stretch (acidic residues) spans 72-89 (GSDDYSDVEDGGAEEGDS). The span at 112 to 124 (TSSTSTASTSSGS) shows a compositional bias: low complexity. The span at 152 to 170 (RRPELDLSPKIENRSDSSS) shows a compositional bias: basic and acidic residues. Over residues 185-202 (NKDNPSRGQGNENPSASD) the composition is skewed to polar residues.

The protein belongs to the herpesviridae BKRF4 family.

This is an uncharacterized protein from Alcelaphine herpesvirus 1 (strain C500) (AlHV-1).